We begin with the raw amino-acid sequence, 448 residues long: MARKYFGTDGIRGRANGVITPELALKVGQAAGLVFQRGEYRHRVVIGKDTRLSGYMIETAMVAGFTSVGMDVLLLGPIPTPAVAMLTKSMRADLGVMISASHNPFADNGIKLFGPSGYKLSDEVELQIEELMDENIDRRLAQSTQLGRARRIDGVHDRYIEFAKRTLPRELSLEGLRVVVDCANGAAYKVVPEALWELGADVIAIGAEPDGMNINKECGSTSPDALAHKVREMRADIGIALDGDADRVLMIDERGHLIDGDQLLAVIAQSWKEDGRLAKPGIVTTVMSNLGLERFLAGEGLSMVRTPVGDRYVLEQMMAQGYNLGGEPSGHIIMSDFTTTGDGFVAALQVLAVVQKLGRPVSEVCHRFEPLPQILKNVRYRSGKPLENPKVQSTIADAEKKLNGCGRLLVRSSGTEPVIRVMGEGDDRDRVEEAVDMIVAALSIGVAA.

The Phosphoserine intermediate role is filled by S101. Mg(2+)-binding residues include S101, D242, D244, and D246. At S101 the chain carries Phosphoserine.

Belongs to the phosphohexose mutase family. It depends on Mg(2+) as a cofactor. Post-translationally, activated by phosphorylation.

The catalysed reaction is alpha-D-glucosamine 1-phosphate = D-glucosamine 6-phosphate. In terms of biological role, catalyzes the conversion of glucosamine-6-phosphate to glucosamine-1-phosphate. This Afipia carboxidovorans (strain ATCC 49405 / DSM 1227 / KCTC 32145 / OM5) (Oligotropha carboxidovorans) protein is Phosphoglucosamine mutase.